Consider the following 237-residue polypeptide: Probable glutathione-independent glyoxalase HSP32 (237 aa).

Residues Cys-138, His-139, and Glu-170 contribute to the active site.

This sequence belongs to the peptidase C56 family. HSP31-like subfamily. As to quaternary structure, homodimer.

The protein localises to the cytoplasm. The protein resides in the P-body. It carries out the reaction methylglyoxal + H2O = (R)-lactate + H(+). Catalyzes the conversion of methylglyoxal (MG) to D-lactate in a single glutathione (GSH)-independent step. May play a role in detoxifying endogenously produced glyoxals. Involved in protection against reactive oxygen species (ROS). Important for viability in stationary phase. May negatively regulate TORC1 in response to nutrient limitation. The polypeptide is Probable glutathione-independent glyoxalase HSP32 (Saccharomyces cerevisiae (strain ATCC 204508 / S288c) (Baker's yeast)).